Consider the following 228-residue polypeptide: 2,3-bisphosphoglycerate-dependent phosphoglycerate mutase (228 aa).

Substrate-binding positions include 7–14 (RHGESAWN), 20–21 (TG), arginine 59, 86–89 (ERHY), lysine 97, 113–114 (RR), and 182–183 (GN). Histidine 8 (tele-phosphohistidine intermediate) is an active-site residue. Glutamate 86 serves as the catalytic Proton donor/acceptor.

It belongs to the phosphoglycerate mutase family. BPG-dependent PGAM subfamily.

The catalysed reaction is (2R)-2-phosphoglycerate = (2R)-3-phosphoglycerate. It participates in carbohydrate degradation; glycolysis; pyruvate from D-glyceraldehyde 3-phosphate: step 3/5. Functionally, catalyzes the interconversion of 2-phosphoglycerate and 3-phosphoglycerate. The chain is 2,3-bisphosphoglycerate-dependent phosphoglycerate mutase from Fusobacterium nucleatum subsp. nucleatum (strain ATCC 25586 / DSM 15643 / BCRC 10681 / CIP 101130 / JCM 8532 / KCTC 2640 / LMG 13131 / VPI 4355).